Reading from the N-terminus, the 428-residue chain is Probable dual-specificity RNA methyltransferase RlmN 2 (428 aa).

Residue Glu-142 is the Proton acceptor of the active site. The 267-residue stretch at 148-414 (FAGRATACVS…STVRQRRGID (267 aa)) folds into the Radical SAM core domain. A disulfide bridge links Cys-155 with Cys-419. [4Fe-4S] cluster-binding residues include Cys-162, Cys-166, and Cys-169. Basic and acidic residues predominate over residues 207-228 (MRDPSPGREAGEKSRDEADRHR). A disordered region spans residues 207–232 (MRDPSPGREAGEKSRDEADRHRAPPT). S-adenosyl-L-methionine-binding positions include 244–245 (GE), Ser-276, 299–301 (SLH), and Asn-375. The S-methylcysteine intermediate role is filled by Cys-419.

This sequence belongs to the radical SAM superfamily. RlmN family. [4Fe-4S] cluster serves as cofactor.

The protein localises to the cytoplasm. The enzyme catalyses adenosine(2503) in 23S rRNA + 2 reduced [2Fe-2S]-[ferredoxin] + 2 S-adenosyl-L-methionine = 2-methyladenosine(2503) in 23S rRNA + 5'-deoxyadenosine + L-methionine + 2 oxidized [2Fe-2S]-[ferredoxin] + S-adenosyl-L-homocysteine. It catalyses the reaction adenosine(37) in tRNA + 2 reduced [2Fe-2S]-[ferredoxin] + 2 S-adenosyl-L-methionine = 2-methyladenosine(37) in tRNA + 5'-deoxyadenosine + L-methionine + 2 oxidized [2Fe-2S]-[ferredoxin] + S-adenosyl-L-homocysteine. Its function is as follows. Specifically methylates position 2 of adenine 2503 in 23S rRNA and position 2 of adenine 37 in tRNAs. The polypeptide is Probable dual-specificity RNA methyltransferase RlmN 2 (Opitutus terrae (strain DSM 11246 / JCM 15787 / PB90-1)).